Reading from the N-terminus, the 50-residue chain is U3-ctenitoxin-Asp1a (50 aa).

In terms of tissue distribution, expressed by the venom gland.

The protein resides in the secreted. Possible neurotoxin. The polypeptide is U3-ctenitoxin-Asp1a (Ancylometes sp. (South American fishing spider)).